We begin with the raw amino-acid sequence, 127 residues long: Small ribosomal subunit protein bS6 (127 aa).

The tract at residues 104 to 127 (QGAEKGKSSRKEKVAAEAEASEEA) is disordered. The span at 107–119 (EKGKSSRKEKVAA) shows a compositional bias: basic and acidic residues.

The protein belongs to the bacterial ribosomal protein bS6 family.

Binds together with bS18 to 16S ribosomal RNA. The sequence is that of Small ribosomal subunit protein bS6 from Coxiella burnetii (strain CbuG_Q212) (Coxiella burnetii (strain Q212)).